Consider the following 411-residue polypeptide: Putative ion-transport protein YfeO (411 aa).

11 helical membrane-spanning segments follow: residues 9 to 29 (MLLLSLPALIIGVASSLVLIA), 54 to 74 (DSPFWIVGMLTLTGIVVGLII), 99 to 119 (ALPGLLLALIIGLAGGVSLGP), 149 to 169 (ILASAGTIGALFGTPVAAALI), 186 to 206 (LFAPLMAAAAGSLTTSLFFHP), 223 to 243 (IASGAIVAAIAIAAGMVAVWC), 258 to 278 (VLILGIGGFILGILGVIGGPL), 296 to 316 (LGAGDYFTLAAVKLAALVIAA), 322 to 342 (GGRIFPAVFIGAALGLMLHAH), 343 to 363 (VEAVPAAITVSCAILGLVLVV), and 386 to 406 (LLCIVMLPAWLLLAGKPLLAA).

This sequence belongs to the chloride channel (TC 2.A.49) family.

The protein localises to the cell membrane. The chain is Putative ion-transport protein YfeO from Salmonella schwarzengrund (strain CVM19633).